Reading from the N-terminus, the 264-residue chain is MRAYHDLLTRILSEGVRKEDRTGTGTLSVFGHQMRFDLADGFPLVTTKQLHLRSIIHELLWFLKGDTNVAYLKENGVTIWDEWADANGDLGPVYGKQWRSWAKPEGGTVDQIAWILDEIARNPDSRRLIVSAWNPADLDRMALAPCHCLFQFYVADGRLSCQLYQRSADAFLGVPFNIASYALLTAMMAQVTGLKAGDFVHTFGDAHLYANHLEQTHLQLSREPRPLPRLRLNPEVRSLFDFRFEDIVIEGYEPHPAIKAPVAV.

Arg21 contributes to the dUMP binding site. His51 serves as a coordination point for (6R)-5,10-methylene-5,6,7,8-tetrahydrofolate. Arg126–Arg127 provides a ligand contact to dUMP. The active-site Nucleophile is the Cys146. Residues Arg166–Asp169, Asn177, and His207–Tyr209 contribute to the dUMP site. (6R)-5,10-methylene-5,6,7,8-tetrahydrofolate is bound at residue Asp169. Position 263 (Ala263) interacts with (6R)-5,10-methylene-5,6,7,8-tetrahydrofolate.

The protein belongs to the thymidylate synthase family. Bacterial-type ThyA subfamily. In terms of assembly, homodimer.

It localises to the cytoplasm. It catalyses the reaction dUMP + (6R)-5,10-methylene-5,6,7,8-tetrahydrofolate = 7,8-dihydrofolate + dTMP. The protein operates within pyrimidine metabolism; dTTP biosynthesis. Functionally, catalyzes the reductive methylation of 2'-deoxyuridine-5'-monophosphate (dUMP) to 2'-deoxythymidine-5'-monophosphate (dTMP) while utilizing 5,10-methylenetetrahydrofolate (mTHF) as the methyl donor and reductant in the reaction, yielding dihydrofolate (DHF) as a by-product. This enzymatic reaction provides an intracellular de novo source of dTMP, an essential precursor for DNA biosynthesis. The polypeptide is Thymidylate synthase (Methylorubrum extorquens (strain CM4 / NCIMB 13688) (Methylobacterium extorquens)).